The primary structure comprises 327 residues: MQFIDQANIILKAGKGGNGIVSFRREKFVPAGGPSGGNGGRGGSVILMADNNLQTLLDFKFKREIIAEDGCKGGPNKRSGASGEDTILKVPCGTEIRDIKTGIILGDLTKHKQSLTIAIGGRGGHGNAYYLSNQNRAPESFTEGKDGEIWEVQLELKLLAEVGIIGLPNAGKSTLISVVSSARPKIANYPFTTLIPNLGVVRKIDGNGCLFADIPGLISGAADGVGLGHDFLRHIQRTKILVHLIDAIAENPLHDFEIIEQELKKYGKGLLDKERIIVLNKIELVDDDYLKIISKKLEDLSKKKVLVISSSLKKGLSSLLSEVWKRI.

Residues 1-159 (MQFIDQANII…WEVQLELKLL (159 aa)) enclose the Obg domain. One can recognise an OBG-type G domain in the interval 160-327 (AEVGIIGLPN…SLLSEVWKRI (168 aa)). ATP contacts are provided by residues 166–173 (GLPNAGKS), 191–195 (FTTLI), 213–216 (DIPG), 280–283 (NKIE), and 309–311 (SSS). Residues S173 and T193 each coordinate Mg(2+).

This sequence belongs to the TRAFAC class OBG-HflX-like GTPase superfamily. OBG GTPase family. In terms of assembly, monomer. Mg(2+) is required as a cofactor.

The protein localises to the cytoplasm. Its function is as follows. An essential GTPase which binds GTP, GDP and possibly (p)ppGpp with moderate affinity, with high nucleotide exchange rates and a fairly low GTP hydrolysis rate. Plays a role in control of the cell cycle, stress response, ribosome biogenesis and in those bacteria that undergo differentiation, in morphogenesis control. In Prochlorococcus marinus (strain AS9601), this protein is GTPase Obg.